A 448-amino-acid chain; its full sequence is tRNA(Ile)-lysidine synthase (448 aa).

Residue serine 25–serine 30 participates in ATP binding.

Belongs to the tRNA(Ile)-lysidine synthase family.

The protein localises to the cytoplasm. The catalysed reaction is cytidine(34) in tRNA(Ile2) + L-lysine + ATP = lysidine(34) in tRNA(Ile2) + AMP + diphosphate + H(+). Functionally, ligates lysine onto the cytidine present at position 34 of the AUA codon-specific tRNA(Ile) that contains the anticodon CAU, in an ATP-dependent manner. Cytidine is converted to lysidine, thus changing the amino acid specificity of the tRNA from methionine to isoleucine. This chain is tRNA(Ile)-lysidine synthase, found in Brucella melitensis biotype 2 (strain ATCC 23457).